The sequence spans 402 residues: Imidazolonepropionase (402 aa).

H69 and H71 together coordinate Fe(3+). H69 and H71 together coordinate Zn(2+). Positions 78, 141, and 174 each coordinate 4-imidazolone-5-propanoate. Y141 serves as a coordination point for N-formimidoyl-L-glutamate. Fe(3+) is bound at residue H239. H239 is a Zn(2+) binding site. Q242 contacts 4-imidazolone-5-propanoate. Residue D314 coordinates Fe(3+). D314 contributes to the Zn(2+) binding site. N-formimidoyl-L-glutamate contacts are provided by N316 and G318. T319 is a binding site for 4-imidazolone-5-propanoate.

This sequence belongs to the metallo-dependent hydrolases superfamily. HutI family. The cofactor is Zn(2+). Fe(3+) is required as a cofactor.

The protein resides in the cytoplasm. The enzyme catalyses 4-imidazolone-5-propanoate + H2O = N-formimidoyl-L-glutamate. Its pathway is amino-acid degradation; L-histidine degradation into L-glutamate; N-formimidoyl-L-glutamate from L-histidine: step 3/3. Functionally, catalyzes the hydrolytic cleavage of the carbon-nitrogen bond in imidazolone-5-propanoate to yield N-formimidoyl-L-glutamate. It is the third step in the universal histidine degradation pathway. In Maricaulis maris (strain MCS10) (Caulobacter maris), this protein is Imidazolonepropionase.